Reading from the N-terminus, the 375-residue chain is Ribosomal RNA large subunit methyltransferase F (375 aa).

2 disordered regions span residues 1-39 and 262-281; these read MKNNSHNAKQAPSKAAKPKHDNDVNKAKPKRVKKKAAVK and NQRKKGVKQQNSPVKQGKPT. Positions 27-38 are enriched in basic residues; the sequence is AKPKRVKKKAAV.

This sequence belongs to the methyltransferase superfamily. METTL16/RlmF family.

It is found in the cytoplasm. The catalysed reaction is adenosine(1618) in 23S rRNA + S-adenosyl-L-methionine = N(6)-methyladenosine(1618) in 23S rRNA + S-adenosyl-L-homocysteine + H(+). Specifically methylates the adenine in position 1618 of 23S rRNA. The chain is Ribosomal RNA large subunit methyltransferase F from Vibrio parahaemolyticus serotype O3:K6 (strain RIMD 2210633).